Here is a 185-residue protein sequence, read N- to C-terminus: Prorelaxin H1 (185 aa).

Residues 1 to 22 (MPRLFLFHLLEFCLLLNQFSRA) form the signal peptide. 3 cysteine pairs are disulfide-bonded: C35-C172, C47-C185, and C171-C176. The propeptide at 56–158 (SLSQEDAPQT…KYLGLDTHSQ (103 aa)) is connecting peptide.

This sequence belongs to the insulin family. In terms of assembly, heterodimer of a B chain and an A chain linked by two disulfide bonds. As to expression, prostate. Not expressed in placenta, decidua or ovary.

Its subcellular location is the secreted. Relaxin is an ovarian hormone that acts with estrogen to produce dilatation of the birth canal in many mammals. May be involved in remodeling of connective tissues during pregnancy, promoting growth of pubic ligaments and ripening of the cervix. In Homo sapiens (Human), this protein is Prorelaxin H1 (RLN1).